Consider the following 113-residue polypeptide: Protein ORF3 (113 aa).

Hydrophobic stretches follow at residues 1-21 (MGSP…CLCC) and 32-52 (AVVG…GLIL). Positions 27–67 (ASRLAAVVGGAAAVPAVVSGVTGLILSPSPSPIFIQPTPSP) are interaction with host HPX. An interaction with the capsid protein region spans residues 47–71 (VTGLILSPSPSPIFIQPTPSPPMSF). Ser-70 carries the phosphoserine; by host modification. Residues 71–113 (FHNPGLELALDSRPAPLXPLGVTSPSAPPLPPVVDLPQLGLRR) form a homodimerization, and interaction with host AMBP/bikunin region. The segment at 90–113 (LGVTSPSAPPLPPVVDLPQLGLRR) is disordered. Residues 94-103 (SPSAPPLPPV) are interaction with host SRC, HCK, FYN, PIK3R3 and GRB2. Residues 95-98 (PSAP) carry the PTAP/PSAP motif motif.

This sequence belongs to the hepevirus ORF3 protein family. In terms of assembly, forms homooligomers. Interacts with host SRC, HCK, FYN, PIK3R3 and GRB2 (via SH3 domain); binding does not activate the kinases. Interacts with host AMBP/bikunin and AMBP/alpha-1-microglobulin peptides. Interacts with host HPX/hemopexin. Interacts (when phosphorylated) with capsid protein ORF2. Interacts with host TSG101; this interaction plays a role in viral release from the host cell. Interacts with host SIRPA; this interaction down-regulates the phosphorylation of host IRF3. In terms of processing, palmitoylated in the N-terminus.

The protein resides in the host endoplasmic reticulum membrane. It localises to the host cytoplasm. The protein localises to the host cytoskeleton. Its subcellular location is the virion. It is found in the host cell membrane. Small multifunctional phosphoprotein involved in virion morphogenesis, egress and counteracting host innate immunity. Plays critical roles in the final steps of viral release by interacting with host TSG101, a member of the vacuolar protein-sorting pathway and using other cellular host proteins involved in vesicle formation pathway. Also acts as a viroporin and forms ion conductive pores allowing viral particle release. Impairs the generation of type I interferon by down-regulating host TLR3 and TLR7 as well as their downstream signaling pathways. Down-regulates the phosphorylation of host IRF3 via the interaction with host SIRP-alpha, thereby inhibiting IFN-I expression. Interacts with host microtubules. The chain is Protein ORF3 from Hepatitis E virus genotype 3 (isolate Human/United States/US2) (HEV-3).